We begin with the raw amino-acid sequence, 308 residues long: Dihydroorotate dehydrogenase A (fumarate) (308 aa).

Residues Ser24 and Lys48–Ser49 each bind FMN. Residues Lys48, Asn72–Leu76, and Asn132 each bind substrate. Residue Asn132 coordinates FMN. Cys135 serves as the catalytic Nucleophile. Lys171 and Ile197 together coordinate FMN. Asn198–Thr199 lines the substrate pocket. Residues Gly223 and Gly249–Gly250 contribute to the FMN site.

The protein belongs to the dihydroorotate dehydrogenase family. Type 1 subfamily. In terms of assembly, homodimer. FMN is required as a cofactor.

The protein resides in the cytoplasm. The enzyme catalyses (S)-dihydroorotate + fumarate = orotate + succinate. It functions in the pathway pyrimidine metabolism; UMP biosynthesis via de novo pathway. In terms of biological role, catalyzes the conversion of dihydroorotate to orotate with fumarate as the electron acceptor. This chain is Dihydroorotate dehydrogenase A (fumarate) (pyrD), found in Limosilactobacillus reuteri (strain DSM 20016) (Lactobacillus reuteri).